The sequence spans 248 residues: 2,3-bisphosphoglycerate-dependent phosphoglycerate mutase (248 aa).

Substrate-binding positions include 8 to 15, 21 to 22, Arg60, 87 to 90, Lys98, 114 to 115, and 183 to 184; these read RHGESTWN, TG, ERHY, RR, and GN. His9 functions as the Tele-phosphohistidine intermediate in the catalytic mechanism. Glu87 (proton donor/acceptor) is an active-site residue.

Belongs to the phosphoglycerate mutase family. BPG-dependent PGAM subfamily. Homodimer.

The enzyme catalyses (2R)-2-phosphoglycerate = (2R)-3-phosphoglycerate. It functions in the pathway carbohydrate degradation; glycolysis; pyruvate from D-glyceraldehyde 3-phosphate: step 3/5. Functionally, catalyzes the interconversion of 2-phosphoglycerate and 3-phosphoglycerate. This Ralstonia nicotianae (strain ATCC BAA-1114 / GMI1000) (Ralstonia solanacearum) protein is 2,3-bisphosphoglycerate-dependent phosphoglycerate mutase.